Consider the following 98-residue polypeptide: Transcription elongation factor A protein-like 7 (98 aa).

Positions 1–22 (MQKSCNEKEGKPKGSEAKREDE) are enriched in basic and acidic residues. The tract at residues 1–33 (MQKSCNEKEGKPKGSEAKREDEQPCGALEGQRL) is disordered. Residues 59-89 (GEEMTGEEEEMERCLEEIRSLRKKFRALHSN) are a coiled coil.

The protein belongs to the TFS-II family. TFA subfamily.

It is found in the nucleus. Functionally, plays a role in the negative regulation of NF-kappa-B signaling at the basal level by modulating transcriptional activity of NF-kappa-B on its target gene promoters. Associates with cyclin D1 promoter containing Myc E-box sequence and transcriptionally represses cyclin D1 expression. Regulates telomerase reverse transcriptase expression and telomerase activity in both ALT (alternative lengthening of telomeres)and telomerase-positive cell lines. This chain is Transcription elongation factor A protein-like 7 (Tceal7), found in Mus musculus (Mouse).